The sequence spans 101 residues: MLTLAHYLVLGAILFAMSIVGIFLNRRNIIIILMAIELMLLAVNTNFVAFSHYLGDVHGQIFVFFVLTVAAAEAAIGLAILVTLFRKLDTINVEDLDQLKG.

3 consecutive transmembrane segments (helical) span residues 4-24 (LAHYLVLGAILFAMSIVGIFL), 29-49 (IIIILMAIELMLLAVNTNFVA), and 61-81 (IFVFFVLTVAAAEAAIGLAIL).

The protein belongs to the complex I subunit 4L family. In terms of assembly, NDH-1 is composed of 14 different subunits. Subunits NuoA, H, J, K, L, M, N constitute the membrane sector of the complex.

It is found in the cell inner membrane. The catalysed reaction is a quinone + NADH + 5 H(+)(in) = a quinol + NAD(+) + 4 H(+)(out). NDH-1 shuttles electrons from NADH, via FMN and iron-sulfur (Fe-S) centers, to quinones in the respiratory chain. The immediate electron acceptor for the enzyme in this species is believed to be ubiquinone. Couples the redox reaction to proton translocation (for every two electrons transferred, four hydrogen ions are translocated across the cytoplasmic membrane), and thus conserves the redox energy in a proton gradient. This Burkholderia vietnamiensis (strain G4 / LMG 22486) (Burkholderia cepacia (strain R1808)) protein is NADH-quinone oxidoreductase subunit K.